We begin with the raw amino-acid sequence, 380 residues long: Guanine nucleotide-binding protein subunit beta (380 aa).

WD repeat units lie at residues 64–94 (GHSG…IVWN), 106–136 (LHCP…SIFN), 155–186 (GHKG…VLWD), 203–234 (GHTA…RLWD), 247–277 (GHEG…RLFD), 296–326 (NELP…YVWD), and 342–372 (SHEG…KIWA).

It belongs to the WD repeat G protein beta family. G proteins are composed of 3 units, alpha, beta and gamma. Interacts with the gamma subunits RGG1 and RGG2.

Its subcellular location is the cell membrane. Its function is as follows. Guanine nucleotide-binding proteins (G proteins) are involved as modulators or transducers in various transmembrane signaling systems. The beta and gamma chains are required for the GTPase activity, for replacement of GDP by GTP, and for G protein-effector interaction. This Oryza sativa subsp. japonica (Rice) protein is Guanine nucleotide-binding protein subunit beta.